The chain runs to 407 residues: Obg-like ATPase homolog (407 aa).

Positions 46 to 301 (LKIGIVGMPN…LTPEEAAQEC (256 aa)) constitute an OBG-type G domain. ATP is bound by residues 55 to 60 (NIGKST) and methionine 249. Residues 322–405 (NLIHYFTASE…EPGDIIFWKI (84 aa)) enclose the TGS domain.

The protein belongs to the TRAFAC class OBG-HflX-like GTPase superfamily. OBG GTPase family.

In terms of biological role, hydrolyzes ATP, and can also hydrolyze GTP with lower efficiency. Has lower affinity for GTP. The sequence is that of Obg-like ATPase homolog from Schizosaccharomyces pombe (strain 972 / ATCC 24843) (Fission yeast).